Here is a 213-residue protein sequence, read N- to C-terminus: GTP cyclohydrolase 1 (213 aa).

Zn(2+) is bound by residues Cys104, His107, and Cys175.

The protein belongs to the GTP cyclohydrolase I family. As to quaternary structure, toroid-shaped homodecamer, composed of two pentamers of five dimers.

The enzyme catalyses GTP + H2O = 7,8-dihydroneopterin 3'-triphosphate + formate + H(+). The protein operates within cofactor biosynthesis; 7,8-dihydroneopterin triphosphate biosynthesis; 7,8-dihydroneopterin triphosphate from GTP: step 1/1. The chain is GTP cyclohydrolase 1 from Brucella anthropi (strain ATCC 49188 / DSM 6882 / CCUG 24695 / JCM 21032 / LMG 3331 / NBRC 15819 / NCTC 12168 / Alc 37) (Ochrobactrum anthropi).